We begin with the raw amino-acid sequence, 365 residues long: Coxsackievirus and adenovirus receptor homolog (365 aa).

The first 19 residues, Met-1 to Ser-19, serve as a signal peptide directing secretion. Ig-like C2-type domains lie at Leu-20–Thr-136 and Pro-141–Asp-228. At Leu-20 to Thr-238 the chain is on the extracellular side. Cystine bridges form between Cys-41–Cys-120, Cys-146–Cys-223, and Cys-162–Cys-212. Asn-106 carries an N-linked (GlcNAc...) asparagine glycan. The helical transmembrane segment at Ile-239 to Cys-259 threads the bilayer. Residues Cys-259 and Cys-260 are each lipidated (S-palmitoyl cysteine). Residues Cys-260 to Val-365 are Cytoplasmic-facing. The segment covering Tyr-269 to Pro-282 has biased composition (basic and acidic residues). The segment at Tyr-269–Lys-315 is disordered. Over residues Ser-286 to Lys-315 the composition is skewed to polar residues. Residues Ser-297, Ser-304, Ser-306, Ser-323, Ser-332, and Ser-363 each carry the phosphoserine modification. The short motif at Lys-360–Val-365 is the PDZ-binding element.

In terms of assembly, monomer. May form homodimer. Interacts with LNX, MAGI1, DLG4, PRKCABP, TJP1 and CTNNB1. Interacts with MPDZ; recruits MPDZ to intercellular contact sites. Interacts with JAML (homodimeric form). Post-translationally, N-glycosylated. Palmitoylated on Cys-259 and/or Cys-260; required for proper localization to the plasma membrane. As to expression, expressed in heart, brain, spleen, lung, liver, muscle, kidney, testis, spleen and skeletal muscle.

The protein localises to the cell membrane. The protein resides in the basolateral cell membrane. It localises to the cell junction. It is found in the tight junction. Its subcellular location is the adherens junction. Functionally, component of the epithelial apical junction complex that may function as a homophilic cell adhesion molecule and is essential for tight junction integrity. Also involved in transepithelial migration of leukocytes through adhesive interactions with JAML a transmembrane protein of the plasma membrane of leukocytes. The interaction between both receptors also mediates the activation of gamma-delta T-cells, a subpopulation of T-cells residing in epithelia and involved in tissue homeostasis and repair. Upon epithelial CXADR-binding, JAML induces downstream cell signaling events in gamma-delta T-cells through PI3-kinase and MAP kinases. It results in proliferation and production of cytokines and growth factors by T-cells that in turn stimulate epithelial tissues repair. The chain is Coxsackievirus and adenovirus receptor homolog (Cxadr) from Rattus norvegicus (Rat).